We begin with the raw amino-acid sequence, 372 residues long: Ciliary neurotrophic factor receptor subunit alpha (372 aa).

Residues M1–A22 form the signal peptide. An Ig-like C2-type domain is found at P27 to H104. A disulfide bond links C46 and C89. Residues N60, N70, N142, and N190 are each glycosylated (N-linked (GlcNAc...) asparagine). Fibronectin type-III domains lie at P108–D205 and P206–P306. Positions W290–S294 match the WSXWS motif motif. A disordered region spans residues P301–L340. Positions T311–L326 are enriched in low complexity. A lipid anchor (GPI-anchor amidated serine) is attached at S342. Positions G343–I372 are cleaved as a propeptide — removed in mature form.

This sequence belongs to the type I cytokine receptor family. Type 3 subfamily. Forms a heterotrimer with LIFR and IL6ST. Interacts with heterodimeric neurotropic cytokine composed of CLCF1/CLC and CRLF1/CLF-1. Either alone or in complex with the heterodimer CLCF1-CRLF1 interacts with SORL1; this interaction may promote internalization and lysosomal degradation. In terms of tissue distribution, expressed in retina, brain, spleen, lung, liver and kidney. In the retina it is highly expressed by photoreceptors, but also found in the RPE, inner nuclear layer and ganglion cells.

Its subcellular location is the cell membrane. Binds to CNTF. The alpha subunit provides the receptor specificity. This chain is Ciliary neurotrophic factor receptor subunit alpha (CNTFR), found in Canis lupus familiaris (Dog).